The sequence spans 231 residues: Large ribosomal subunit protein uL1 (231 aa).

The protein belongs to the universal ribosomal protein uL1 family. As to quaternary structure, part of the 50S ribosomal subunit.

Functionally, binds directly to 23S rRNA. The L1 stalk is quite mobile in the ribosome, and is involved in E site tRNA release. Protein L1 is also a translational repressor protein, it controls the translation of the L11 operon by binding to its mRNA. This is Large ribosomal subunit protein uL1 from Methylococcus capsulatus (strain ATCC 33009 / NCIMB 11132 / Bath).